Here is a 416-residue protein sequence, read N- to C-terminus: Choline/ethanolaminephosphotransferase 1 (416 aa).

The disordered stretch occupies residues 1–20 (MSGHRSTRKRCGDSHPESPV). The residue at position 18 (serine 18) is a Phosphoserine. Phosphothreonine is present on threonine 40. Asparagine 86 serves as a coordination point for CDP-choline. 2 helical membrane-spanning segments follow: residues 89–108 (TIIGLSINICTTILLVFYCP) and 116–133 (LWAYIACACGLFIYQSLD). Mg(2+) is bound at residue aspartate 133. A glycan (N-linked (GlcNAc...) asparagine) is linked at asparagine 144. CDP-choline is bound at residue glutamate 151. A Mg(2+)-binding site is contributed by aspartate 154. Histidine 155 (proton acceptor) is an active-site residue. 8 helical membrane passes run 156 to 176 (GCDSLSTVFVVLGTCIAVQLG), 180 to 199 (DWMFFCCFAGTFMFYCAHWQ), 210 to 230 (IIDVTEVQIFIIIMHLLAVIG), 246 to 267 (MKLFPALCTVAGTIFSCTNYFR), 286 to 306 (VLSPFLHIGSVITLAVMIYKK), 315 to 334 (HPCLYILTFGFVSAKITNKL), 349 to 363 (TAFIGPALLFLDQYF), and 368 to 388 (DEYIVLWIALVFSFFDLIRYC). Aspartate 158 is a Mg(2+) binding site.

It belongs to the CDP-alcohol phosphatidyltransferase class-I family. In terms of assembly, homodimer. Mg(2+) serves as cofactor. Mn(2+) is required as a cofactor.

The protein resides in the endoplasmic reticulum membrane. The protein localises to the nucleus membrane. The catalysed reaction is CDP-ethanolamine + a 1,2-diacyl-sn-glycerol = a 1,2-diacyl-sn-glycero-3-phosphoethanolamine + CMP + H(+). The enzyme catalyses CDP-choline + a 1,2-diacyl-sn-glycerol = a 1,2-diacyl-sn-glycero-3-phosphocholine + CMP + H(+). It catalyses the reaction 1-O-alkyl-2-acyl-sn-glycerol + CDP-choline = a 1-O-alkyl-2-acyl-sn-glycero-3-phosphocholine + CMP + H(+). It carries out the reaction a 1-O-(1Z-alkenyl)-2-acyl-sn-glycerol + CDP-choline = a 1-O-(1Z-alkenyl)-2-acyl-sn-glycero-3-phosphocholine + CMP + H(+). The catalysed reaction is 1,2-dioctanoyl-sn-glycerol + CDP-choline = 1,2-dioctanoyl-sn-glycero-3-phosphocholine + CMP + H(+). The enzyme catalyses 1,2-didecanoyl-sn-glycerol + CDP-choline = 1,2-didecanoyl-sn-glycero-3-phosphocholine + CMP + H(+). It catalyses the reaction CDP-choline + 1,2-di-(9Z-octadecenoyl)-sn-glycerol = 1,2-di-(9Z-octadecenoyl)-sn-glycero-3-phosphocholine + CMP + H(+). It carries out the reaction 1-hexadecanoyl-2-(9Z-octadecenoyl)-sn-glycerol + CDP-choline = 1-hexadecanoyl-2-(9Z-octadecenoyl)-sn-glycero-3-phosphocholine + CMP + H(+). The catalysed reaction is CDP-ethanolamine + 1,2-di-(9Z-octadecenoyl)-sn-glycerol = 1,2-di-(9Z-octadecenoyl)-sn-glycero-3-phosphoethanolamine + CMP + H(+). The enzyme catalyses 1-hexadecanoyl-2-(9Z-octadecenoyl)-sn-glycerol + CDP-ethanolamine = 1-hexadecanoyl-2-(9Z-octadecenoyl)-sn-glycero-3-phosphoethanolamine + CMP + H(+). It catalyses the reaction 1-hexadecanoyl-2-(4Z,7Z,10Z,13Z,16Z,19Z-docosahexaenoyl)-sn-glycerol + CDP-choline = 1-hexadecanoyl-2-(4Z,7Z,10Z,13Z,16Z,19Z-docosahexaenoyl)-sn-glycero-3-phosphocholine + CMP + H(+). It carries out the reaction 1,2-di-(9Z-hexadecenoyl)-sn-glycerol + CDP-choline = 1,2-di-(9Z-hexadecenoyl)-sn-glycero-3-phosphocholine + CMP + H(+). The catalysed reaction is 1,2-di-(9Z-hexadecenoyl)-sn-glycerol + CDP-ethanolamine = 1,2-di-(9Z-hexadecenoyl)-sn-glycero-3-phosphoethanolamine + CMP + H(+). The enzyme catalyses 1-O-hexadecyl-2-acetyl-sn-glycerol + CDP-choline = 1-O-hexadecyl-2-acetyl-sn-glycero-3-phosphocholine + CMP + H(+). It catalyses the reaction 1-O-hexadecyl-2-(5Z,8Z,11Z,14Z-eicosatetraenoyl)-sn-glycerol + CDP-choline = 1-O-hexadecyl-2-(5Z,8Z,11Z,14Z)-eicosatetraenoyl-sn-glycero-3-phosphocholine + CMP + H(+). It participates in phospholipid metabolism; phosphatidylethanolamine biosynthesis; phosphatidylethanolamine from ethanolamine: step 3/3. Its pathway is phospholipid metabolism; phosphatidylcholine biosynthesis; phosphatidylcholine from phosphocholine: step 2/2. Functionally, catalyzes both phosphatidylcholine and phosphatidylethanolamine biosynthesis from CDP-choline and CDP-ethanolamine, respectively. Involved in protein-dependent process of phospholipid transport to distribute phosphatidyl choline to the lumenal surface. Has a higher cholinephosphotransferase activity than ethanolaminephosphotransferase activity. In Rattus norvegicus (Rat), this protein is Choline/ethanolaminephosphotransferase 1.